A 209-amino-acid polypeptide reads, in one-letter code: Small ribosomal subunit protein uS3 (209 aa).

The KH type-2 domain maps to 38 to 107 (IRKVIKNKYA…RFIVNVEEIK (70 aa)).

The protein belongs to the universal ribosomal protein uS3 family. As to quaternary structure, part of the 30S ribosomal subunit. Forms a tight complex with proteins S10 and S14.

Its function is as follows. Binds the lower part of the 30S subunit head. Binds mRNA in the 70S ribosome, positioning it for translation. The polypeptide is Small ribosomal subunit protein uS3 (Thermosipho africanus (strain TCF52B)).